The sequence spans 257 residues: Acetylglutamate kinase (257 aa).

Residues 43 to 44 (GG), Arg65, and Asn157 contribute to the substrate site.

It belongs to the acetylglutamate kinase family. ArgB subfamily.

It is found in the cytoplasm. It carries out the reaction N-acetyl-L-glutamate + ATP = N-acetyl-L-glutamyl 5-phosphate + ADP. Its pathway is amino-acid biosynthesis; L-arginine biosynthesis; N(2)-acetyl-L-ornithine from L-glutamate: step 2/4. In terms of biological role, catalyzes the ATP-dependent phosphorylation of N-acetyl-L-glutamate. This chain is Acetylglutamate kinase, found in Mannheimia succiniciproducens (strain KCTC 0769BP / MBEL55E).